We begin with the raw amino-acid sequence, 98 residues long: Small ribosomal subunit protein uS17 (98 aa).

Belongs to the universal ribosomal protein uS17 family. Part of the 30S ribosomal subunit.

Functionally, one of the primary rRNA binding proteins, it binds specifically to the 5'-end of 16S ribosomal RNA. The sequence is that of Small ribosomal subunit protein uS17 from Leptothrix cholodnii (strain ATCC 51168 / LMG 8142 / SP-6) (Leptothrix discophora (strain SP-6)).